The following is a 131-amino-acid chain: Profilin-2 (131 aa).

Cys-13 and Cys-115 are oxidised to a cystine. The Involved in PIP2 interaction signature appears at 81 to 97; the sequence is AVIRGKKGAGGITIKKT. Thr-111 bears the Phosphothreonine mark.

It belongs to the profilin family. As to quaternary structure, occurs in many kinds of cells as a complex with monomeric actin in a 1:1 ratio. Post-translationally, phosphorylated by MAP kinases.

The protein resides in the cytoplasm. The protein localises to the cytoskeleton. Binds to actin and affects the structure of the cytoskeleton. At high concentrations, profilin prevents the polymerization of actin, whereas it enhances it at low concentrations. By binding to PIP2, it inhibits the formation of IP3 and DG. This is Profilin-2 (PRO2) from Phleum pratense (Common timothy).